Reading from the N-terminus, the 81-residue chain is Small ribosomal subunit protein bS20 (81 aa).

This sequence belongs to the bacterial ribosomal protein bS20 family.

Its function is as follows. Binds directly to 16S ribosomal RNA. The sequence is that of Small ribosomal subunit protein bS20 from Mycoplasma capricolum subsp. capricolum (strain California kid / ATCC 27343 / NCTC 10154).